The chain runs to 524 residues: Putative UDP-glucuronosyltransferase ugt-56 (524 aa).

The N-terminal stretch at 1-20 (MLWAFIVWLGALCIYGSAFD) is a signal peptide. Residues N125, N277, and N335 are each glycosylated (N-linked (GlcNAc...) asparagine). The chain crosses the membrane as a helical span at residues 488–508 (LIDSSIALVFMLFIFVFVNHF).

The protein belongs to the UDP-glycosyltransferase family.

Its subcellular location is the membrane. It catalyses the reaction glucuronate acceptor + UDP-alpha-D-glucuronate = acceptor beta-D-glucuronoside + UDP + H(+). The sequence is that of Putative UDP-glucuronosyltransferase ugt-56 (ugt-56) from Caenorhabditis elegans.